A 138-amino-acid polypeptide reads, in one-letter code: UPF0251 protein Dole_1957 (138 aa).

It belongs to the UPF0251 family.

The protein is UPF0251 protein Dole_1957 of Desulfosudis oleivorans (strain DSM 6200 / JCM 39069 / Hxd3) (Desulfococcus oleovorans).